The following is a 63-amino-acid chain: Large ribosomal subunit protein uL30 (63 aa).

It belongs to the universal ribosomal protein uL30 family. In terms of assembly, part of the 50S ribosomal subunit.

The sequence is that of Large ribosomal subunit protein uL30 from Rickettsia typhi (strain ATCC VR-144 / Wilmington).